Here is a 252-residue protein sequence, read N- to C-terminus: Glucosamine-6-phosphate deaminase (252 aa).

Asp-67 acts as the Proton acceptor; for enolization step in catalysis. Asn-137 acts as the For ring-opening step in catalysis. His-139 serves as the catalytic Proton acceptor; for ring-opening step. The active-site For ring-opening step is Glu-144.

This sequence belongs to the glucosamine/galactosamine-6-phosphate isomerase family. NagB subfamily.

The enzyme catalyses alpha-D-glucosamine 6-phosphate + H2O = beta-D-fructose 6-phosphate + NH4(+). Its pathway is amino-sugar metabolism; N-acetylneuraminate degradation; D-fructose 6-phosphate from N-acetylneuraminate: step 5/5. In terms of biological role, catalyzes the reversible isomerization-deamination of glucosamine 6-phosphate (GlcN6P) to form fructose 6-phosphate (Fru6P) and ammonium ion. The polypeptide is Glucosamine-6-phosphate deaminase (Staphylococcus aureus (strain bovine RF122 / ET3-1)).